The sequence spans 841 residues: Auxin response factor 24 (841 aa).

Positions 109–140 (LPEKQQDGNGSGNGNVSKDKVEEEEVVPPAAT) are disordered. The TF-B3 DNA-binding region spans 148 to 250 (FCKTLTASDT…ELRVGVRRAM (103 aa)). Disordered regions lie at residues 366 to 397 (PRPD…KRAR), 663 to 715 (QDAL…SRSC), and 804 to 841 (GALN…SENC). Residues 684 to 695 (AQHDSAREKHQS) show a composition bias toward basic and acidic residues. Composition is skewed to polar residues over residues 701–713 (KNIQ…GSSR) and 830–841 (GLSTPSLNSENC). The PB1 domain maps to 713–797 (RSCKKVHKQG…HKIFIYTREE (85 aa)).

This sequence belongs to the ARF family. As to quaternary structure, homodimers and heterodimers. Expressed in roots, culms, leaves and young panicles.

It is found in the nucleus. In terms of biological role, auxin response factors (ARFs) are transcriptional factors that bind specifically to the DNA sequence 5'-TGTCTC-3' found in the auxin-responsive promoter elements (AuxREs). This Oryza sativa subsp. japonica (Rice) protein is Auxin response factor 24 (ARF24).